A 20-amino-acid polypeptide reads, in one-letter code: Non-specific lipid-transfer protein (20 aa).

It belongs to the plant LTP family.

In terms of biological role, plant non-specific lipid-transfer proteins transfer phospholipids as well as galactolipids across membranes. May play a role in wax or cutin deposition in the cell walls of expanding epidermal cells and certain secretory tissues. In Citrus limon (Lemon), this protein is Non-specific lipid-transfer protein.